A 114-amino-acid polypeptide reads, in one-letter code: Mediator of RNA polymerase II transcription subunit 11 (114 aa).

A coiled-coil region spans residues 28-61 (LELSKEKANASLLDRQLNQFQTSINRVESELSSQ).

This sequence belongs to the Mediator complex subunit 11 family. Component of the Mediator complex. In terms of tissue distribution, ubiquitously expressed at early stage of development. After fertilization expressed in head region as well as in lateral line primordium.

The protein localises to the nucleus. Component of the Mediator complex, a coactivator involved in the regulated transcription of nearly all RNA polymerase II-dependent genes. Mediator functions as a bridge to convey information from gene-specific regulatory proteins to the basal RNA polymerase II transcription machinery. Mediator is recruited to promoters by direct interactions with regulatory proteins and serves as a scaffold for the assembly of a functional pre-initiation complex with RNA polymerase II and the general transcription factors. This is Mediator of RNA polymerase II transcription subunit 11 (med11) from Danio rerio (Zebrafish).